The sequence spans 427 residues: L-glutamine:2-deoxy-scyllo-inosose aminotransferase (427 aa).

The tract at residues methionine 1–proline 20 is disordered. Lysine 205 bears the N6-(pyridoxal phosphate)lysine mark.

Belongs to the DegT/DnrJ/EryC1 family. L-glutamine:2-deoxy-scyllo-inosose/scyllo-inosose aminotransferase subfamily. Pyridoxal 5'-phosphate is required as a cofactor.

The enzyme catalyses 2-deoxy-L-scyllo-inosose + L-glutamine = 2-deoxy-scyllo-inosamine + 2-oxoglutaramate. The catalysed reaction is 3-amino-2,3-dideoxy-scyllo-inosose + L-glutamine = 2-deoxystreptamine + 2-oxoglutaramate. It participates in metabolic intermediate biosynthesis; 2-deoxystreptamine biosynthesis; 2-deoxystreptamine from D-glucose 6-phosphate: step 2/4. The protein operates within antibiotic biosynthesis; kanamycin biosynthesis. Its function is as follows. Catalyzes the PLP-dependent transamination of 2-deoxy-scyllo-inosose (2-DOI) to form 2-deoxy-scyllo-inosamine (2-DOIA) using L-glutamine as the amino donor. Also catalyzes the transamination of 3-amino-2,3-dideoxy-scyllo-inosose (keto-2-DOIA) into 2-deoxystreptamine (2-DOS). The polypeptide is L-glutamine:2-deoxy-scyllo-inosose aminotransferase (kanB) (Streptomyces kanamyceticus).